Reading from the N-terminus, the 358-residue chain is Ganglioside-induced differentiation-associated protein 1 (358 aa).

The region spanning 24–105 is the GST N-terminal domain; the sequence is VKLILYHWTH…YLEQTFLDER (82 aa). Glycyl lysine isopeptide (Lys-Gly) (interchain with G-Cter in ubiquitin) cross-links involve residues Lys50, Lys172, Lys173, Lys188, and Lys190. Residues 153-309 enclose the GST C-terminal domain; that stretch reads PAYATTRIRS…LISAVLPTAF (157 aa). The residue at position 203 (Lys203) is an N6-acetyllysine; alternate. Lys203 is covalently cross-linked (Glycyl lysine isopeptide (Lys-Gly) (interchain with G-Cter in ubiquitin); alternate). Glycyl lysine isopeptide (Lys-Gly) (interchain with G-Cter in ubiquitin) cross-links involve residues Lys206, Lys207, and Lys214. The next 2 membrane-spanning stretches (helical) occupy residues 292 to 312 and 320 to 340; these read VLGHVNNILISAVLPTAFRVA and LGTTLVVGLLAGVGYFAFMLF. The tract at residues 320-358 is required for mitochondrial localization; it reads LGTTLVVGLLAGVGYFAFMLFRKRLGSMILAFRPRPNYF.

It belongs to the GST superfamily. In terms of assembly, homodimer. In terms of processing, ubiquitinated by PRKN during mitophagy, leading to its degradation and enhancement of mitophagy. Deubiquitinated by USP30. As to expression, highly expressed in whole brain and spinal cord. Predominant expression in central tissues of the nervous system not only in neurons but also in Schwann cells.

It is found in the mitochondrion outer membrane. Its subcellular location is the cytoplasm. Functionally, regulates the mitochondrial network by promoting mitochondrial fission. The protein is Ganglioside-induced differentiation-associated protein 1 (GDAP1) of Homo sapiens (Human).